We begin with the raw amino-acid sequence, 228 residues long: L-ribulose-5-phosphate 4-epimerase UlaF (228 aa).

Substrate is bound by residues 26–27 (GN), 43–44 (SG), and 72–73 (SS). 3 residues coordinate Zn(2+): aspartate 74, histidine 93, and histidine 95. Residue aspartate 118 is the Proton donor/acceptor of the active site. Histidine 167 contacts Zn(2+). The active-site Proton donor/acceptor is the tyrosine 225.

This sequence belongs to the aldolase class II family. AraD/FucA subfamily. Zn(2+) is required as a cofactor.

The catalysed reaction is L-ribulose 5-phosphate = D-xylulose 5-phosphate. The protein operates within cofactor degradation; L-ascorbate degradation; D-xylulose 5-phosphate from L-ascorbate: step 4/4. Its function is as follows. Catalyzes the isomerization of L-ribulose 5-phosphate to D-xylulose 5-phosphate. Is involved in the anaerobic L-ascorbate utilization. In Escherichia coli (strain K12 / MC4100 / BW2952), this protein is L-ribulose-5-phosphate 4-epimerase UlaF.